Consider the following 85-residue polypeptide: Putative membrane protein insertion efficiency factor (85 aa).

The tract at residues 62–85 is disordered; that stretch reads KGGFDPVPLKKDKSASKHSHKHNH.

The protein belongs to the UPF0161 family.

Its subcellular location is the cell membrane. In terms of biological role, could be involved in insertion of integral membrane proteins into the membrane. The protein is Putative membrane protein insertion efficiency factor of Staphylococcus aureus (strain Mu3 / ATCC 700698).